A 104-amino-acid chain; its full sequence is Circadian clock oscillator protein KaiB (104 aa).

Belongs to the KaiB family. As to quaternary structure, the KaiABC complex composition changes during the circadian cycle to control KaiC phosphorylation. Complexes KaiC(6), KaiA(2-4):KaiC(6), KaiB(6):KaiC(6) and KaiC(6):KaiB(6):KaiA(12) are among the most important forms, many form cooperatively. Undergoes a major conformational rearrangment; in the free state forms homotetramers as a dimer of dimers. When bound to the CI domain of KaiC switches to a monomeric thioredoxin-fold (KaiB(fs)). KaiB(fs) binds CikA, leading it to dephosphorylate phospho-RpaA.

Its function is as follows. Key component of the KaiABC oscillator complex, which constitutes the main circadian regulator in cyanobacteria. Complex composition changes during the circadian cycle to control KaiC phosphorylation. KaiA stimulates KaiC autophosphorylation, while KaiB sequesters KaiA, leading to KaiC autodephosphorylation. Phospho-Ser-431 KaiC accumulation triggers binding of KaiB to form the KaiB(6):KaiC(6) complex, leading to changes in output regulators CikA and SasA. KaiB switches to a thioredoxin-like fold (KaiB(fs)) when bound to KaiC. KaiB(6):KaiC(6) formation exposes a site for KaiA binding that sequesters KaiA from KaiC, making the KaiC(6):KaiB(6):KaiA(12) complex that results in KaiC autodephosphorylation. A metamorphic protein which reversibly switches between an inactive tetrameric fold and a rare, thioredoxin-like monomeric fold (KaiB(fs)). KaiB(fs) binds phospho-KaiC, KaiA and CikA. KaiA and CikA compete for binding to KaiB(fs), and KaiB(fs) and SasA compete for binding to KaiC, thus the clock oscillator and output signal pathway are tightly coupled. This is Circadian clock oscillator protein KaiB from Acaryochloris marina (strain MBIC 11017).